A 666-amino-acid chain; its full sequence is Long-chain-fatty-acid--CoA ligase ACSBG2 (666 aa).

Residues 230–238 (TSGTTGIPK), 418–423 (ELYGLS), Asp496, and Arg624 contribute to the ATP site.

The protein belongs to the ATP-dependent AMP-binding enzyme family. Bubblegum subfamily. Testis-specific.

The protein resides in the cytoplasm. The protein localises to the membrane. The catalysed reaction is a long-chain fatty acid + ATP + CoA = a long-chain fatty acyl-CoA + AMP + diphosphate. The enzyme catalyses (5Z,8Z,11Z,14Z)-eicosatetraenoate + ATP + CoA = (5Z,8Z,11Z,14Z)-eicosatetraenoyl-CoA + AMP + diphosphate. It carries out the reaction hexadecanoate + ATP + CoA = hexadecanoyl-CoA + AMP + diphosphate. It catalyses the reaction (9Z)-octadecenoate + ATP + CoA = (9Z)-octadecenoyl-CoA + AMP + diphosphate. The catalysed reaction is (9Z,12Z)-octadecadienoate + ATP + CoA = (9Z,12Z)-octadecadienoyl-CoA + AMP + diphosphate. The enzyme catalyses tetracosanoate + ATP + CoA = tetracosanoyl-CoA + AMP + diphosphate. Functionally, catalyzes the conversion of fatty acids such as long chain and very long-chain fatty acids to their active form acyl-CoAs for both synthesis of cellular lipids, and degradation via beta-oxidation. Can activate diverse saturated, monosaturated and polyunsaturated fatty acids. Has increased ability to activate oleic and linoleic acid. May play a role in spermatogenesis. In Homo sapiens (Human), this protein is Long-chain-fatty-acid--CoA ligase ACSBG2.